The following is a 244-amino-acid chain: MAASARPVGVGGERATSFAMACSLLSRYVRQNGAAAAELGLGIRGEGEAPRAAPGTMSLLPGEAERKKETMELFPQSAGFGQQDAITADSAADAREQEPEKRQLTIFYGGKVLVFNDFPADKAKGLMQLASKGSTVAPQNAVAPAPAAVTDNTKAPMAVPAPVSSLPTAQADAQKPARANASDMPIARKASLHRFLEKRKDRLNAKTPYQASPSDATPVKKEPESQPWLGLGPNAVVKPIERGQ.

The 36-residue stretch at 97–132 folds into the Tify domain; it reads QEPEKRQLTIFYGGKVLVFNDFPADKAKGLMQLASK. A Jas motif is present at residues 185–210; that stretch reads PIARKASLHRFLEKRKDRLNAKTPYQ. The short motif at 187-194 is the Nuclear localization signal element; it reads ARKASLHR. The tract at residues 193 to 244 is disordered; that stretch reads HRFLEKRKDRLNAKTPYQASPSDATPVKKEPESQPWLGLGPNAVVKPIERGQ. Residues 194–204 are compositionally biased toward basic and acidic residues; the sequence is RFLEKRKDRLN.

It belongs to the TIFY/JAZ family. In terms of processing, ubiquitinated. Targeted for degradation by the SCF(COI1) E3 ubiquitin ligase-proteasome pathway during jasmonate signaling.

The protein resides in the nucleus. In terms of biological role, repressor of jasmonate responses. In Oryza sativa subsp. indica (Rice), this protein is Protein TIFY 10b.